Reading from the N-terminus, the 414-residue chain is Histidine--tRNA ligase (414 aa).

The protein belongs to the class-II aminoacyl-tRNA synthetase family. As to quaternary structure, homodimer.

It is found in the cytoplasm. It carries out the reaction tRNA(His) + L-histidine + ATP = L-histidyl-tRNA(His) + AMP + diphosphate + H(+). In Mycoplasma pneumoniae (strain ATCC 29342 / M129 / Subtype 1) (Mycoplasmoides pneumoniae), this protein is Histidine--tRNA ligase (hisS).